The following is a 465-amino-acid chain: Glutamate--tRNA ligase (465 aa).

A 'HIGH' region motif is present at residues Pro8–Gly18. Residues Arg236–Arg240 carry the 'KMSKS' region motif. Lys239 contributes to the ATP binding site.

The protein belongs to the class-I aminoacyl-tRNA synthetase family. Glutamate--tRNA ligase type 1 subfamily. As to quaternary structure, monomer.

It is found in the cytoplasm. The enzyme catalyses tRNA(Glu) + L-glutamate + ATP = L-glutamyl-tRNA(Glu) + AMP + diphosphate. Functionally, catalyzes the attachment of glutamate to tRNA(Glu) in a two-step reaction: glutamate is first activated by ATP to form Glu-AMP and then transferred to the acceptor end of tRNA(Glu). The sequence is that of Glutamate--tRNA ligase from Nitrosospira multiformis (strain ATCC 25196 / NCIMB 11849 / C 71).